The sequence spans 315 residues: Diacylglycerol kinase (315 aa).

The region spanning 1 to 132 is the DAGKc domain; that stretch reads MRKRARIIYN…VDIGKMNNRY (132 aa). Residues 10–14, Thr41, 67–73, and Thr94 contribute to the ATP site; these read NPTSG and GDGTLNE. Mg(2+)-binding residues include Lys213, Asp216, and Tyr218. The active-site Proton acceptor is Glu273.

It belongs to the diacylglycerol/lipid kinase family. As to quaternary structure, homodimer. Mg(2+) is required as a cofactor.

The enzyme catalyses a 1,2-diacyl-sn-glycerol + ATP = a 1,2-diacyl-sn-glycero-3-phosphate + ADP + H(+). In terms of biological role, catalyzes the phosphorylation of diacylglycerol (DAG) into phosphatidic acid. Is a key enzyme involved in the production of lipoteichoic acid by reintroducing DAG formed from the breakdown of membrane phospholipids into the phosphatidylglycerol biosynthetic pathway. The chain is Diacylglycerol kinase (dagK) from Staphylococcus aureus (strain USA300 / TCH1516).